Here is a 124-residue protein sequence, read N- to C-terminus: Small ribosomal subunit protein bS6 (124 aa).

The disordered stretch occupies residues 96–124 (ETGPSPMMKEVQREEAKKAAAAQPAEAQA). Positions 114–124 (AAAAQPAEAQA) are enriched in low complexity.

The protein belongs to the bacterial ribosomal protein bS6 family.

Functionally, binds together with bS18 to 16S ribosomal RNA. This is Small ribosomal subunit protein bS6 from Burkholderia orbicola (strain MC0-3).